The chain runs to 211 residues: Large ribosomal subunit protein uL4 (211 aa).

The interval Gln40 to Gly85 is disordered. Residues Gln41–Arg54 show a composition bias toward polar residues. A compositionally biased stretch (basic residues) spans Gly60–Gly71.

It belongs to the universal ribosomal protein uL4 family. As to quaternary structure, part of the 50S ribosomal subunit.

Its function is as follows. One of the primary rRNA binding proteins, this protein initially binds near the 5'-end of the 23S rRNA. It is important during the early stages of 50S assembly. It makes multiple contacts with different domains of the 23S rRNA in the assembled 50S subunit and ribosome. Functionally, forms part of the polypeptide exit tunnel. The chain is Large ribosomal subunit protein uL4 from Synechococcus sp. (strain CC9311).